The sequence spans 258 residues: tRNA pseudouridine synthase A (258 aa).

Asp-55 functions as the Nucleophile in the catalytic mechanism. Tyr-113 serves as a coordination point for substrate.

The protein belongs to the tRNA pseudouridine synthase TruA family. In terms of assembly, homodimer.

The catalysed reaction is uridine(38/39/40) in tRNA = pseudouridine(38/39/40) in tRNA. Its function is as follows. Formation of pseudouridine at positions 38, 39 and 40 in the anticodon stem and loop of transfer RNAs. The chain is tRNA pseudouridine synthase A from Limosilactobacillus fermentum (strain NBRC 3956 / LMG 18251) (Lactobacillus fermentum).